The following is a 662-amino-acid chain: 72 kDa type IV collagenase (662 aa).

Positions 1–29 (MEARVAWGALAGPLRVLCVLCCLLGRAIA) are cleaved as a signal peptide. The propeptide at 30–109 (APSPIIKFPG…PRCGNPDVAN (80 aa)) is activation peptide. The Cysteine switch signature appears at 100 to 107 (PRCGNPDV). Cys102 contributes to the Zn(2+) binding site. Residues 110-221 (YNFFPRKPKW…LWTLGEGQVV (112 aa)) form a collagenase-like 1 region. Ca(2+) is bound by residues Asp134 and Asp168. Positions 178 and 180 each coordinate Zn(2+). Residues Asp185 and Gly186 each coordinate Ca(2+). His193 is a binding site for Zn(2+). Residues Gly200, Gly202, and Asp204 each coordinate Ca(2+). His206 contacts Zn(2+). 3 residues coordinate Ca(2+): Asp208, Asp209, and Glu211. The collagen-binding stretch occupies residues 222-396 (RVKYGNADGE…WGFCPDQGYS (175 aa)). Fibronectin type-II domains are found at residues 228–276 (ADGE…FCPH), 286–334 (ADGQ…FCPE), and 344–392 (SEGA…FCPD). Disulfide bonds link Cys233/Cys259, Cys247/Cys274, Cys291/Cys317, Cys305/Cys332, Cys349/Cys375, and Cys363/Cys390. Residues 397–467 (LFLVAAHEFG…GPTPTLGPVT (71 aa)) form a collagenase-like 2 region. Residue His403 participates in Zn(2+) binding. Residue Glu404 is part of the active site. The Zn(2+) site is built by His407 and His413. Positions 414–662 (SQDPGALMAP…GSIKSDWLGC (249 aa)) are required for inhibitor TIMP2 binding. The disordered stretch occupies residues 446 to 465 (GPSPDADTDTGTGPTPTLGP). Residues Cys471 and Cys662 are joined by a disulfide bond. 4 Hemopexin repeats span residues 474-518 (DIVF…WPEL), 519-565 (PEKI…GLPP), 567-615 (VQQV…WNAI), and 616-662 (PDNL…WLGC). Asp478, Asp523, and Asp571 together coordinate Ca(2+). Residue Asn575 is glycosylated (N-linked (GlcNAc...) asparagine). Position 620 (Asp620) interacts with Ca(2+). A glycan (N-linked (GlcNAc...) asparagine) is linked at Asn644.

This sequence belongs to the peptidase M10A family. Interacts (via the C-terminal hemopexin-like domains-containing region) with the integrin alpha-V/beta-3; the interaction promotes vascular invasion in angiogenic vessels and melamoma cells. Interacts (via the C-terminal PEX domain) with TIMP2 (via the C-terminal); the interaction inhibits the degradation activity. Interacts with GSK3B. Requires Ca(2+) as cofactor. It depends on Zn(2+) as a cofactor. In terms of processing, phosphorylation on multiple sites modulates enzymatic activity. Phosphorylated by PKC in vitro. Post-translationally, the propeptide is processed by MMP14 (MT-MMP1) and MMP16 (MT-MMP3). Autocatalytic cleavage in the C-terminal produces the anti-angiogenic peptide, PEX. This processing appears to be facilitated by binding integrinv/beta3.

It localises to the secreted. Its subcellular location is the extracellular space. The protein localises to the extracellular matrix. It is found in the membrane. The protein resides in the nucleus. It localises to the cytoplasm. Its subcellular location is the mitochondrion. The enzyme catalyses Cleavage of gelatin type I and collagen types IV, V, VII, X. Cleaves the collagen-like sequence Pro-Gln-Gly-|-Ile-Ala-Gly-Gln.. Its function is as follows. Ubiquitinous metalloproteinase that is involved in diverse functions such as remodeling of the vasculature, angiogenesis, tissue repair, tumor invasion, inflammation, and atherosclerotic plaque rupture. As well as degrading extracellular matrix proteins, can also act on several nonmatrix proteins such as big endothelial 1 and beta-type CGRP promoting vasoconstriction. Also cleaves KISS at a Gly-|-Leu bond. Appears to have a role in myocardial cell death pathways. Contributes to myocardial oxidative stress by regulating the activity of GSK3beta. Cleaves GSK3beta in vitro. Involved in the formation of the fibrovascular tissues. In terms of biological role, PEX, the C-terminal non-catalytic fragment of MMP2, possesses anti-angiogenic and anti-tumor properties and inhibits cell migration and cell adhesion to FGF2 and vitronectin. Ligand for integrin alpha-v/beta-3 on the surface of blood vessels. Mediates the proteolysis of CHUK/IKKA and initiates a primary innate immune response by inducing mitochondrial-nuclear stress signaling with activation of the pro-inflammatory NF-kappaB, NFAT and IRF transcriptional pathways. This chain is 72 kDa type IV collagenase (Mmp2), found in Mus musculus (Mouse).